The primary structure comprises 225 residues: Uridylate kinase (225 aa).

9–10 (GS) provides a ligand contact to ATP. Residue Gly-46 coordinates UMP. Residues Gly-47 and Arg-51 each contribute to the ATP site. Residues Asp-67 and 115-121 (THPAHTT) contribute to the UMP site. Thr-141, Asn-142, Tyr-147, and Asp-150 together coordinate ATP.

Belongs to the UMP kinase family. In terms of assembly, homohexamer.

It localises to the cytoplasm. It catalyses the reaction UMP + ATP = UDP + ADP. Its pathway is pyrimidine metabolism; CTP biosynthesis via de novo pathway; UDP from UMP (UMPK route): step 1/1. Inhibited by UTP. Its function is as follows. Catalyzes the reversible phosphorylation of UMP to UDP. This Methanococcus maripaludis (strain C7 / ATCC BAA-1331) protein is Uridylate kinase.